The sequence spans 133 residues: Aspartate 1-decarboxylase (133 aa).

Ser26 acts as the Schiff-base intermediate with substrate; via pyruvic acid in catalysis. Ser26 is modified (pyruvic acid (Ser)). A substrate-binding site is contributed by Thr58. Catalysis depends on Tyr59, which acts as the Proton donor. 74–76 is a substrate binding site; it reads GAA.

The protein belongs to the PanD family. In terms of assembly, heterooctamer of four alpha and four beta subunits. It depends on pyruvate as a cofactor. Post-translationally, is synthesized initially as an inactive proenzyme, which is activated by self-cleavage at a specific serine bond to produce a beta-subunit with a hydroxyl group at its C-terminus and an alpha-subunit with a pyruvoyl group at its N-terminus.

It is found in the cytoplasm. The enzyme catalyses L-aspartate + H(+) = beta-alanine + CO2. The protein operates within cofactor biosynthesis; (R)-pantothenate biosynthesis; beta-alanine from L-aspartate: step 1/1. In terms of biological role, catalyzes the pyruvoyl-dependent decarboxylation of aspartate to produce beta-alanine. The chain is Aspartate 1-decarboxylase from Legionella pneumophila (strain Lens).